We begin with the raw amino-acid sequence, 206 residues long: Protein SYM1 (206 aa).

A run of 3 helical transmembrane segments spans residues 16 to 36, 103 to 123, and 155 to 175; these read PLITNIITTGFLFGSGDYLAQ, LVFAPFIGIPLYYSVMSVLEF, and LFNFALIPVQFRLLVVNIFSI.

Belongs to the peroxisomal membrane protein PXMP2/4 family.

The protein resides in the mitochondrion inner membrane. Functionally, may be involved in cellular response to stress. Required to maintain mitochondrial DNA (mtDNA) integrity and stability. The sequence is that of Protein SYM1 (SYM1) from Debaryomyces hansenii (strain ATCC 36239 / CBS 767 / BCRC 21394 / JCM 1990 / NBRC 0083 / IGC 2968) (Yeast).